The chain runs to 409 residues: WW domain-containing oxidoreductase (409 aa).

The tract at residues 1-23 is disordered; it reads MIALPDTDSEDELPPGWEERATD. WW domains are found at residues 11-44 and 52-86; these read DELPPGWEERATDDGTVCYVNQQGKTSQWTHPRT and GELPLGWEKYYDEQGKRFMFLNKETQQRTNVDPRL. NADP(+) is bound at residue 128–134; it reads GANCGIG. Ser-257 contributes to the substrate binding site. Residue Tyr-288 is the Proton acceptor of the active site.

The protein belongs to the short-chain dehydrogenases/reductases (SDR) family.

Its subcellular location is the cytoplasm. The protein localises to the mitochondrion. The protein resides in the golgi apparatus. It is found in the lysosome. Its function is as follows. Putative oxidoreductase. May control genotoxic stress-induced cell death. May play a role in TGFB1 signaling and TGFB1-mediated cell death. May also play a role in tumor necrosis factor (TNF)-mediated cell death. May play a role in Wnt signaling. This Drosophila melanogaster (Fruit fly) protein is WW domain-containing oxidoreductase (Wwox).